We begin with the raw amino-acid sequence, 669 residues long: GTP-binding protein 1 (669 aa).

The interval 1 to 32 (MAAERSRSPVDSPVPASMFAPEPSSPGAARAA) is disordered. Ser6, Ser8, Ser12, Ser24, Ser25, Ser44, Ser47, and Ser69 each carry phosphoserine. The tr-type G domain occupies 158–389 (FLEVRVAVVG…LNLLSPRTSY (232 aa)). The G1 stretch occupies residues 167-174 (GNVDAGKS). Residue 167–174 (GNVDAGKS) participates in GTP binding. Positions 206-210 (GRTSS) are G2. Residues 252–255 (DLAG) form a G3 region. GTP contacts are provided by residues 252–256 (DLAGH) and 308–311 (TKID). The interval 308–311 (TKID) is G4. The G5 stretch occupies residues 366–368 (SNV). 2 stretches are compositionally biased toward polar residues: residues 573–595 (LLQT…QSTK) and 620–637 (DEAS…SGLQ). The segment at 573–669 (LLQTTNNSPM…GACVTPASGC (97 aa)) is disordered. Ser580 carries the phosphoserine modification. A compositionally biased stretch (basic residues) spans 646 to 657 (GRRRGGQRHKVK).

The protein belongs to the TRAFAC class translation factor GTPase superfamily. Classic translation factor GTPase family. GTPBP1 subfamily. Interacts with EXOSC2/RRP4, EXOSC3/RRP40, EXOSC5/RRP46, HNRNPD, HNRNPR and SYNCRIP. Identified in a complex with HNRNPD, HNRNPL, HNRNPQ, HNRNPR, HNRNPU and AANAT mRNA, but does not bind mRNA by itself. In terms of tissue distribution, detected in pineal gland (at protein level).

Its subcellular location is the cytoplasm. In terms of biological role, promotes degradation of target mRNA species. Plays a role in the regulation of circadian mRNA stability. Binds GTP and has GTPase activity. This chain is GTP-binding protein 1 (Gtpbp1), found in Rattus norvegicus (Rat).